We begin with the raw amino-acid sequence, 693 residues long: Elongation factor G (693 aa).

In terms of domain architecture, tr-type G spans 8 to 282; it reads EKTRNIGIMA…AVIDYLPSPL (275 aa). Residues 17 to 24, 81 to 85, and 135 to 138 contribute to the GTP site; these read AHIDAGKT, DTPGH, and NKMD.

It belongs to the TRAFAC class translation factor GTPase superfamily. Classic translation factor GTPase family. EF-G/EF-2 subfamily.

It is found in the cytoplasm. In terms of biological role, catalyzes the GTP-dependent ribosomal translocation step during translation elongation. During this step, the ribosome changes from the pre-translocational (PRE) to the post-translocational (POST) state as the newly formed A-site-bound peptidyl-tRNA and P-site-bound deacylated tRNA move to the P and E sites, respectively. Catalyzes the coordinated movement of the two tRNA molecules, the mRNA and conformational changes in the ribosome. This Staphylococcus carnosus (strain TM300) protein is Elongation factor G.